Here is a 371-residue protein sequence, read N- to C-terminus: tRNA (guanine(26)-N(2))-dimethyltransferase (371 aa).

Positions Met1–Val370 constitute a Trm1 methyltransferase domain. Arg36, Arg66, Asp81, Asp107, and Ala108 together coordinate S-adenosyl-L-methionine. Zn(2+) is bound by residues Cys238, Cys241, Cys258, and Cys261.

The protein belongs to the class I-like SAM-binding methyltransferase superfamily. Trm1 family.

It catalyses the reaction guanosine(26) in tRNA + 2 S-adenosyl-L-methionine = N(2)-dimethylguanosine(26) in tRNA + 2 S-adenosyl-L-homocysteine + 2 H(+). Functionally, dimethylates a single guanine residue at position 26 of a number of tRNAs using S-adenosyl-L-methionine as donor of the methyl groups. This chain is tRNA (guanine(26)-N(2))-dimethyltransferase, found in Halobacterium salinarum (strain ATCC 700922 / JCM 11081 / NRC-1) (Halobacterium halobium).